The sequence spans 133 residues: Small ribosomal subunit protein uS8 (133 aa).

Belongs to the universal ribosomal protein uS8 family. Part of the 30S ribosomal subunit. Contacts proteins S5 and S12.

Its function is as follows. One of the primary rRNA binding proteins, it binds directly to 16S rRNA central domain where it helps coordinate assembly of the platform of the 30S subunit. The protein is Small ribosomal subunit protein uS8 of Synechococcus sp. (strain RCC307).